Reading from the N-terminus, the 476-residue chain is Cysteine--tRNA ligase (476 aa).

Cys29 is a binding site for Zn(2+). The 'HIGH' region signature appears at 31 to 41; sequence PTVYDYTHIGH. The Zn(2+) site is built by Cys209, His234, and Glu238. The 'KMSKS' region signature appears at 266-270; sequence KMSKS. Lys269 is an ATP binding site.

This sequence belongs to the class-I aminoacyl-tRNA synthetase family. Zn(2+) is required as a cofactor.

The protein resides in the cytoplasm. The enzyme catalyses tRNA(Cys) + L-cysteine + ATP = L-cysteinyl-tRNA(Cys) + AMP + diphosphate. This chain is Cysteine--tRNA ligase, found in Thermococcus kodakarensis (strain ATCC BAA-918 / JCM 12380 / KOD1) (Pyrococcus kodakaraensis (strain KOD1)).